The following is an 86-amino-acid chain: Triple QxxK/R motif-containing protein (86 aa).

The chain crosses the membrane as a helical span at residues 51–71 (VGLVLAAILALLLAFYAFFYL).

This sequence belongs to the TRIQK family.

It localises to the endoplasmic reticulum membrane. Functionally, may play a role in cell growth and maintenance of cell morphology. The polypeptide is Triple QxxK/R motif-containing protein (TRIQK) (Pongo abelii (Sumatran orangutan)).